The following is a 4235-amino-acid chain: Tenellin synthetase (4235 aa).

Residues 15-455 form the Ketosynthase family 3 (KS3) domain; sequence SEPIAIVGSA…GTNAHAIIER (441 aa). Active-site for beta-ketoacyl synthase activity residues include C189, H326, and H375. A malonyl-CoA:ACP transacylase (MAT) domain region spans residues 590 to 924; sequence IFTGQGAQWP…ANDAVAFSTA (335 aa). Residues 993–1135 are N-terminal hotdog fold; sequence HELLGRRMPD…GRIAVHLGAK (143 aa). Residues 993 to 1310 are dehydratase (DH) domain; it reads HELLGRRMPD…GFEVRAVGEP (318 aa). In terms of domain architecture, PKS/mFAS DH spans 993–1313; sequence HELLGRRMPD…VRAVGEPDAS (321 aa). H1025 acts as the Proton acceptor; for dehydratase activity in catalysis. Positions 1158–1313 are C-terminal hotdog fold; sequence LQQLDCEKLY…VRAVGEPDAS (156 aa). The active-site Proton donor; for dehydratase activity is the D1217. A methyltransferase (MT) domain region spans residues 1459–1652; that stretch reads RLYTEDKGMH…FSGVDHIVHD (194 aa). The segment at 2208-2381 is ketoreductase (KR) domain; the sequence is TYLMVGAAGG…AASIIHVGHV (174 aa). Residues 2500–2580 enclose the Carrier 1 domain; sequence EAAAAALKGF…QLSALAAKLA (81 aa). An O-(pantetheine 4'-phosphoryl)serine modification is found at S2540. The interval 2587–2709 is disordered; it reads RAQLEEASGN…EISSNGFFTQ (123 aa). Over residues 2605–2619 the composition is skewed to basic and acidic residues; it reads NDKETGPSKKGKAQE. Composition is skewed to polar residues over residues 2645-2659 and 2666-2678; these read GGSSTANFTTSSSVS and QESTLQSSENNGE. Over residues 2679 to 2695 the composition is skewed to low complexity; the sequence is STPSKSSNCNSDSGSDN. A condensation (C) domain region spans residues 2720–3163; the sequence is REAPMSPAQS…TAQSVGDCVV (444 aa). The adenylation (A) (KR) domain stretch occupies residues 3197–3609; it reads CQQHSTKSAI…DGTLLCFGRI (413 aa). Positions 3724-3750 are disordered; it reads DEAAAATSPSNDNNNNNTPSGGGGEKM. Over residues 3726–3742 the composition is skewed to low complexity; the sequence is AAAATSPSNDNNNNNTP. Residues 3748–3833 form the Carrier 2 domain; the sequence is EKMTVRQGEL…GMARCVAEQR (86 aa). S3793 carries the post-translational modification O-(pantetheine 4'-phosphoryl)serine. The tract at residues 3860–3889 is disordered; sequence EKLQHSSASSSSSSSSSSAGSSSTQRPRKT. Low complexity predominate over residues 3865–3882; sequence SSASSSSSSSSSSAGSSS. The reductase (RED) domain stretch occupies residues 3896 to 4141; sequence LTGATGFLGG…LDFGQVDKVV (246 aa).

It in the C-terminal section; belongs to the NRP synthetase family.

Its pathway is secondary metabolite biosynthesis. Functionally, hybrid PKS-NRPS synthetase; part of the gene cluster that mediates the biosynthesis of tenellin-type 2-pyridones, iron-chelating compounds involved in iron stress tolerance, competition with the natural competitor fungus Metarhizium robertsii and insect hosts infection. TenS catalyzes the assembly of the polyketide-amino acid backbone. Because tenS lacks a designated enoylreductase (ER) domain, the required activity is provided the enoyl reductase tenC. Upon formation of the polyketide backbone on the thiotemplate, the triketide is transferred to the NRPS module and linked to tyrosine to produce the pyrrolidine-2-dione intermediates, including pretellinin A, 11-hydropretellenin A, 12-hydropretellenin A, 13-hydropretellenin A, 14-hydropretellenin A, 12-oxopretellenin A and prototellinin D. The pathway begins with the assembly of the polyketide-amino acid backbone by the hybrid PKS-NRPS tenS with the help of the enoyl reductase tenC. These enzymes catalyze the synthesis of the pyrrolidine-2-dione intermediates pretellinin A, 11-hydropretellenin A, 12-hydropretellenin A, 13-hydropretellenin A, 14-hydropretellenin A, 12-oxopretellenin A and prototellinin D. The cytochrome P450 monooxygenase tenA then catalyzes an oxidative ring expansion of pretenellin A and 14-hydropretellenin A to form the 2-pyridone core, leading to pretenellin B and pyridovericin, respectively. The cytochrome P450 monooxygenase tenB is then required for the selective N-hydroxylation of the 2-pyridone nitrogen of yield tellinin and 15-hydroxytellenin (15-HT), respectively. The UDP-glucosyltransferase GT1 and the methyltransferase MT1, located outside the tenS gene cluster, contribute to the stepwise glycosylation and methylation of 15-HT to obtain the glycoside pyridovericin-N-O-(4-O-methyl-beta-D-glucopyranoside) (PMGP). Additional related compounds such as 1-O-methyl-15-HT, (8Z)-1-O-methyl-15-HT, and O-methyltenellin A are also produced but the enzymes involved in their biosynthesis have still to be determined. The polypeptide is Tenellin synthetase (Beauveria bassiana (strain ARSEF 2860) (White muscardine disease fungus)).